The primary structure comprises 419 residues: Peptide chain release factor subunit 1 (419 aa).

It belongs to the eukaryotic release factor 1 family. As to quaternary structure, heterodimer of two subunits, one of which binds GTP.

It localises to the cytoplasm. Its function is as follows. Directs the termination of nascent peptide synthesis (translation) in response to the termination codons UAA, UAG and UGA. The chain is Peptide chain release factor subunit 1 from Methanococcus maripaludis (strain C6 / ATCC BAA-1332).